An 81-amino-acid chain; its full sequence is MSESNNYSAFFVLLFIFTILFLIVVAFLLLGILNGAFATYAHHPLSPSLLSSLDFVLYLFAFGILAVLFLLIAFAIQRKGS.

2 helical membrane passes run 10–30 (FFVL…FLLL) and 56–76 (VLYL…AFAI).

It localises to the host membrane. This is an uncharacterized protein from Acidianus two-tailed virus (ATV).